The sequence spans 165 residues: Transcription antitermination protein NusB (165 aa).

Belongs to the NusB family.

In terms of biological role, involved in transcription antitermination. Required for transcription of ribosomal RNA (rRNA) genes. Binds specifically to the boxA antiterminator sequence of the ribosomal RNA (rrn) operons. This chain is Transcription antitermination protein NusB, found in Nitratidesulfovibrio vulgaris (strain DSM 19637 / Miyazaki F) (Desulfovibrio vulgaris).